A 451-amino-acid polypeptide reads, in one-letter code: NAC domain containing protein 52 (451 aa).

The disordered stretch occupies residues 1-21 (MGRESVAVVTAPPSATAPGTA). The 152-residue stretch at 27-178 (LAPGFRFHPT…AYVLCRVFHK (152 aa)) folds into the NAC domain. The DNA-binding element occupies 126-184 (LGMKKTLVFHSGRAPDGLRTNWVMHEYRLVEYETEKNGNLVQDAYVLCRVFHKNNIGPP). Disordered stretches follow at residues 255–337 (DQQN…TTTT) and 370–400 (KKEK…KVND). Basic and acidic residues predominate over residues 256–270 (QQNHHENDLKPEEHN). Positions 272 to 292 (NNNYDENEETLKREQMEEEER) form a coiled coil. Positions 318–337 (ESNNNSSRNTQDHCSSTTTT) are enriched in low complexity. Basic and acidic residues predominate over residues 370–384 (KKEKPQQPLRPHKEP). The stretch at 398–446 (VNDLQKEIHQMSVERETFKLEMMSAEAMISILQSRIDALRQENEELKKN) forms a coiled coil.

In terms of assembly, interacts with JMJ14 and NAC050. As to expression, mostly expressed in floral organs, and, at low levels, in other organs.

The protein resides in the nucleus. Its function is as follows. Transcriptional repressor that binds to the motif 5'-(C/T)A(C/A)G-3' in the promoter of target genes. Also binds to the 5'-CTTGNNNNNCAAG-3' consensus sequence in chromatin. Can bind to the mitochondrial dysfunction motif (MDM) present in the upstream regions of mitochondrial dysfunction stimulon (MDS) genes involved in mitochondrial retrograde regulation (MRR). Together with NAC050 and JMJ14, regulates gene expression and flowering time by associating with the histone demethylase JMJ14, probably by the promotion of RNA-mediated gene silencing. Regulates siRNA-dependent post-transcriptional gene silencing (PTGS) through SGS3 expression modulation. Required during pollen development. The polypeptide is NAC domain containing protein 52 (Arabidopsis thaliana (Mouse-ear cress)).